Reading from the N-terminus, the 112-residue chain is MKGTLLLLALLMIGELGFHTTEACVPFFAGYAGVISGSRLWLYHELSAFNGTPKETVAYEKIQDCYKEQGVKSQTLEPQILASILVTPECLQYYSEETFTKIKDALKKISQH.

The N-terminal stretch at 1 to 23 is a signal peptide; that stretch reads MKGTLLLLALLMIGELGFHTTEA.

It belongs to the secretoglobin family. Expressed in lacrimal gland, at higher level in males than females.

It is found in the secreted. The protein is Secretoglobin family 2B member 24 (Scgb2b24) of Mus musculus (Mouse).